We begin with the raw amino-acid sequence, 165 residues long: Cathelicidin-7 (165 aa).

The signal sequence occupies residues 1–29 (METQRASFSLGRSSLWLLLLGLVVPSASA). The propeptide occupies 30–130 (QDLSYREAVL…FDITCNNIQS (101 aa)). 2 disulfide bridges follow: Cys86-Cys97 and Cys108-Cys125. Arg164 carries the arginine amide modification.

Belongs to the cathelicidin family. In terms of tissue distribution, expressed in bone marrow myeloid cells, spleen and testis.

It localises to the secreted. Exerts a potent antimicrobial activity. This is Cathelicidin-7 (CATHL7) from Bos taurus (Bovine).